We begin with the raw amino-acid sequence, 215 residues long: MNDTLLTTYTLAEGLHWLDLIGVLAFAMSGALLGVRKRFDLFGVLVLGAVTAVGGGAIRDSLTGQTPPLFLRDETYLWTALLGALLAFAFGERLARFERTLSLFDSAGLALFATSGALGAIKIGLGPLGVVFAGMLSGVGGGIIRDLIANEVPEVMYRRDQLYATAAAAGAGAVWLLAPHFTPFQAQAGGALLVLFLRWVSRRQWVRLPVRRLPE.

A run of 6 helical transmembrane segments spans residues 15–35 (LHWL…LLGV), 39–59 (FDLF…GAIR), 75–95 (TYLW…ERLA), 101–121 (LSLF…LGAI), 123–143 (IGLG…GGGI), and 162–182 (LYAT…PHFT).

It belongs to the UPF0126 family.

The protein resides in the cell membrane. In Deinococcus radiodurans (strain ATCC 13939 / DSM 20539 / JCM 16871 / CCUG 27074 / LMG 4051 / NBRC 15346 / NCIMB 9279 / VKM B-1422 / R1), this protein is UPF0126 membrane protein DR_2368.